We begin with the raw amino-acid sequence, 221 residues long: PKHD-type hydroxylase P9303_20491 (221 aa).

Residues 80-174 form the Fe2OG dioxygenase domain; the sequence is HIHGVMFSRS…RLVCVGWIQS (95 aa). His98, Asp100, and His155 together coordinate Fe cation. Residue Arg165 participates in 2-oxoglutarate binding.

Requires Fe(2+) as cofactor. The cofactor is L-ascorbate.

This chain is PKHD-type hydroxylase P9303_20491, found in Prochlorococcus marinus (strain MIT 9303).